The primary structure comprises 508 residues: Gasdermin-C (508 aa).

Positions Met-1–Gly-257 are triggers pyroptosis.

This sequence belongs to the gasdermin family. As to quaternary structure, homooligomer; homooligomeric ring-shaped pore complex containing 27-28 subunits when inserted in the membrane. In terms of processing, cleavage by CASP8 relieves autoinhibition by releasing the N-terminal moiety (Gasdermin-C, N-terminal) that initiates pyroptosis. The cleavage site is unclear. According to a publication, it takes place after Asp-240 in response to alpha-ketoglutarate. Another paper reports cleavage by CASP8 after Asp-365. Post-translationally, palmitoylated. Expressed mainly in trachea and spleen. In the esophagus, expressed in differentiating cells and probably in differentiated cells. Also detected in gastric epithelium.

The protein localises to the cytoplasm. It is found in the cytosol. It localises to the cell membrane. With respect to regulation, the full-length protein before cleavage is inactive: intramolecular interactions between N- and C-terminal domains mediate autoinhibition in the absence of activation signal. The intrinsic pyroptosis-inducing activity is carried by the released N-terminal moiety (Gasdermin-C, N-terminal) following cleavage by caspase CASP8. Functionally, this form constitutes the precursor of the pore-forming protein: upon cleavage, the released N-terminal moiety (Gasdermin-C, N-terminal) binds to membranes and forms pores, triggering pyroptosis. Its function is as follows. Pore-forming protein that causes membrane permeabilization and pyroptosis. Produced by the cleavage of gasdermin-C by caspase CASP8 in response to death signals. After cleavage, moves to the plasma membrane where it strongly binds to membrane inner leaflet lipids. Homooligomerizes within the membrane and forms pores of 10-15 nanometers (nm) of inner diameter, triggering pyroptosis. This chain is Gasdermin-C, found in Homo sapiens (Human).